Consider the following 412-residue polypeptide: uncharacterized protein (412 aa).

Residues Met1–Pro17 show a composition bias toward polar residues. Disordered regions lie at residues Met1–Gly20, Glu223–Thr243, and Gln310–Ala412. Residues Lys340–Asn355 are compositionally biased toward polar residues. The span at Gly361–Gly379 shows a compositional bias: gly residues. Residues Ser390–Asn402 are compositionally biased toward low complexity. The segment covering Ala403 to Ala412 has biased composition (polar residues).

This is an uncharacterized protein from Schizosaccharomyces pombe (strain 972 / ATCC 24843) (Fission yeast).